The sequence spans 353 residues: MISENLGENQTEKIPLKGRTLKELSEIMITLGEKPFRAKQIYHGLYVNRYETWDQFTTFSKIFKEKLEELCSLTHLQVVKQLKSVDGTQKFTFTSESGNGKEFEAVWIPSGDGGRKTICISSQIGCTLNCKFCATAKLEFQGNLKAHEIVDQILQVEKIVGDKATNVVFMGMGEPLHNYFNVIRAASIFHDPDAFNLGAKRITISTSGVVNGIRRFIENKEPYNFAISLNHPDPKGRLQIMDIEEKFSLPELLQAAKDFTRELKRRITFEYVMIPGVNMGFENANKLVKIAKSLDCKINVIPLNTEFFGWRRPTREEIAEFIALLEPAGVPILNRRSPGKDIFGACGMLASKS.

Glutamate 104 acts as the Proton acceptor in catalysis. The region spanning 112–341 (DGGRKTICIS…ILNRRSPGKD (230 aa)) is the Radical SAM core domain. An intrachain disulfide couples cysteine 119 to cysteine 346. 3 residues coordinate [4Fe-4S] cluster: cysteine 126, cysteine 130, and cysteine 133. Residues 173-174 (GE), serine 205, 228-230 (SLN), and asparagine 304 each bind S-adenosyl-L-methionine. Cysteine 346 (S-methylcysteine intermediate) is an active-site residue.

This sequence belongs to the radical SAM superfamily. RlmN family. It depends on [4Fe-4S] cluster as a cofactor.

Its subcellular location is the cytoplasm. The enzyme catalyses adenosine(2503) in 23S rRNA + 2 reduced [2Fe-2S]-[ferredoxin] + 2 S-adenosyl-L-methionine = 2-methyladenosine(2503) in 23S rRNA + 5'-deoxyadenosine + L-methionine + 2 oxidized [2Fe-2S]-[ferredoxin] + S-adenosyl-L-homocysteine. The catalysed reaction is adenosine(37) in tRNA + 2 reduced [2Fe-2S]-[ferredoxin] + 2 S-adenosyl-L-methionine = 2-methyladenosine(37) in tRNA + 5'-deoxyadenosine + L-methionine + 2 oxidized [2Fe-2S]-[ferredoxin] + S-adenosyl-L-homocysteine. Its function is as follows. Specifically methylates position 2 of adenine 2503 in 23S rRNA and position 2 of adenine 37 in tRNAs. This Leptospira interrogans serogroup Icterohaemorrhagiae serovar Lai (strain 56601) protein is Probable dual-specificity RNA methyltransferase RlmN.